We begin with the raw amino-acid sequence, 523 residues long: uncharacterized protein (523 aa).

Over residues 1-14 (MAVSKNIKSNVSTH) the composition is skewed to polar residues. 3 disordered regions span residues 1 to 36 (MAVS…VKKA), 51 to 187 (HSSE…VVSS), and 200 to 224 (QKQE…EMEK). A compositionally biased stretch (basic and acidic residues) spans 87–97 (DNRGTRLKGDI). 2 stretches are compositionally biased toward acidic residues: residues 117 to 130 (DMEE…DNEY) and 138 to 182 (QDDD…DDEN). Basic and acidic residues predominate over residues 200–210 (QKQEKEEEKQP).

It belongs to the AATF family.

This is an uncharacterized protein from Dictyostelium discoideum (Social amoeba).